Here is a 408-residue protein sequence, read N- to C-terminus: Multidrug resistance protein MdtG (408 aa).

11 helical membrane passes run 16–36 (LIVA…VMPF), 58–78 (IVFS…GGLA), 92–112 (LGMG…QFLI), 115–135 (ALLG…ATQV), 146–166 (TLST…GLLA), 173–193 (PVFF…LFCI), 224–244 (LFVT…ILTL), 256–276 (VAFI…LSAP), 290–310 (ILIT…YVQT), 319–339 (FLLG…LVYN), and 378–398 (AVFL…WNSL).

It belongs to the major facilitator superfamily. DHA1 family. MdtG (TC 2.A.1.2.20) subfamily.

It localises to the cell inner membrane. Functionally, confers resistance to fosfomycin and deoxycholate. This Escherichia coli (strain 55989 / EAEC) protein is Multidrug resistance protein MdtG.